Consider the following 50-residue polypeptide: Protein hunchback (50 aa).

3 consecutive C2H2-type zinc fingers follow at residues His1–His5, Phe11–His33, and Tyr39–Tyr50.

The protein belongs to the hunchback C2H2-type zinc-finger protein family.

The protein resides in the nucleus. Its function is as follows. Gap class segmentation protein that controls development of head structures. The polypeptide is Protein hunchback (hb) (Schultesia lampyridiformis (Firefly mimic roach)).